A 321-amino-acid chain; its full sequence is Cytochrome f (321 aa).

The signal sequence occupies residues Met1–Ala35. Residues Tyr36, Cys56, Cys59, and His60 each contribute to the heme site. Residues Ile287–Leu306 form a helical membrane-spanning segment.

This sequence belongs to the cytochrome f family. The 4 large subunits of the cytochrome b6-f complex are cytochrome b6, subunit IV (17 kDa polypeptide, petD), cytochrome f and the Rieske protein, while the 4 small subunits are PetG, PetL, PetM and PetN. The complex functions as a dimer. The cofactor is heme.

Its subcellular location is the plastid. The protein localises to the chloroplast thylakoid membrane. In terms of biological role, component of the cytochrome b6-f complex, which mediates electron transfer between photosystem II (PSII) and photosystem I (PSI), cyclic electron flow around PSI, and state transitions. The sequence is that of Cytochrome f from Psilotum nudum (Whisk fern).